An 891-amino-acid polypeptide reads, in one-letter code: Major core protein OPG136 precursor (891 aa).

The propeptide occupies 615 to 697; the sequence is SPEGEETIIC…ILDRIITNAG (83 aa).

Belongs to the orthopxvirus protein OPG136 family. In terms of assembly, interacts with P39/A4. Post-translationally, the precursor is cleaved by OPG083 to give rise to the 62 kDa mature protein during virion maturation. Proteolytic cleavage of major core proteins OPG136, OPG129, and OPG098, which occurs at a late stage of core formation, is required for production of infectious mature virions (MV).

Its subcellular location is the virion. Core protein 4a is the most abundant virion protein. Major component of the virion core that undergoes proteolytic processing during the immature virion (IV) to mature virion (MV) transition. The polypeptide is Major core protein OPG136 precursor (OPG136) (Cynomys gunnisoni (Gunnison's prairie dog)).